A 935-amino-acid polypeptide reads, in one-letter code: Dual 3',5'-cyclic-AMP and -GMP phosphodiesterase 11A (935 aa).

The segment at 41 to 125 (RHSSGQGASD…ASQKELRKSF (85 aa)) is disordered. The segment covering 54-69 (ALAGASSLAQSSARGS) has biased composition (low complexity). 3 positions are modified to phosphoserine: serine 162, serine 163, and serine 239. 2 consecutive GAF domains span residues 217 to 370 (DLTS…GIAI) and 402 to 558 (DLEK…GLGI). Serine 424 contacts 3',5'-cyclic GMP. One can recognise a PDEase domain in the interval 588–912 (SKAEVDKFKA…RKWEELHQKR (325 aa)). Residue histidine 664 is the Proton donor of the active site. Residues histidine 668, histidine 704, aspartate 705, and aspartate 816 each contribute to the a divalent metal cation site. Positions 915–935 (VSAASPVPSSPSPAVAGEDRL) are disordered.

Belongs to the cyclic nucleotide phosphodiesterase family. Requires a divalent metal cation as cofactor. In terms of tissue distribution, isoform 1 is expressed in brain, heart, kidney and liver, but not in prostate. Isoform 2 is specifically expressed in testis. Isoform 3 is expressed in various tissues including brain, lung, skeletal muscle, spleen, testis and prostate.

It localises to the cytoplasm. It is found in the cytosol. The catalysed reaction is 3',5'-cyclic GMP + H2O = GMP + H(+). The enzyme catalyses 3',5'-cyclic AMP + H2O = AMP + H(+). Inhibited by 3-isobutyl-1-methylxanthine (IBMX), zaprinast and dipyridamole. cGMP acts as an allosteric activator. In terms of biological role, plays a role in signal transduction by regulating the intracellular concentration of cyclic nucleotides cAMP and cGMP. Catalyzes the hydrolysis of both cAMP and cGMP to 5'-AMP and 5'-GMP, respectively. In Rattus norvegicus (Rat), this protein is Dual 3',5'-cyclic-AMP and -GMP phosphodiesterase 11A.